We begin with the raw amino-acid sequence, 105 residues long: UPF0145 protein (105 aa).

This sequence belongs to the UPF0145 family.

The protein is UPF0145 protein of Enterococcus faecalis (Streptococcus faecalis).